Consider the following 296-residue polypeptide: Porphobilinogen deaminase (296 aa).

S-(dipyrrolylmethanemethyl)cysteine is present on C232.

It belongs to the HMBS family. Monomer. The cofactor is dipyrromethane.

The enzyme catalyses 4 porphobilinogen + H2O = hydroxymethylbilane + 4 NH4(+). It functions in the pathway porphyrin-containing compound metabolism; protoporphyrin-IX biosynthesis; coproporphyrinogen-III from 5-aminolevulinate: step 2/4. Functionally, tetrapolymerization of the monopyrrole PBG into the hydroxymethylbilane pre-uroporphyrinogen in several discrete steps. The protein is Porphobilinogen deaminase of Corynebacterium aurimucosum (strain ATCC 700975 / DSM 44827 / CIP 107346 / CN-1) (Corynebacterium nigricans).